The following is a 320-amino-acid chain: L-lactate dehydrogenase (320 aa).

NAD(+) is bound by residues valine 18, aspartate 39, arginine 44, tyrosine 69, and 83–84 (GA). Glutamine 86 and arginine 92 together coordinate substrate. NAD(+) contacts are provided by residues serine 105, 122–124 (AAN), and serine 147. 124-127 (NPVD) contributes to the substrate binding site. 152 to 155 (DSSR) provides a ligand contact to substrate. The Proton acceptor role is filled by histidine 179. Position 223 is a phosphotyrosine (tyrosine 223). Residue threonine 232 coordinates substrate.

Belongs to the LDH/MDH superfamily. LDH family. Homotetramer.

The protein localises to the cytoplasm. It catalyses the reaction (S)-lactate + NAD(+) = pyruvate + NADH + H(+). It participates in fermentation; pyruvate fermentation to lactate; (S)-lactate from pyruvate: step 1/1. With respect to regulation, the quaternary structure is constitutionally similar to the active conformation of allosteric LDHs, and the regulation is independent of the fructose 1,6-bisphosphate-binding site. Functionally, catalyzes the conversion of lactate to pyruvate. The polypeptide is L-lactate dehydrogenase (Lactiplantibacillus pentosus (Lactobacillus pentosus)).